Here is a 448-residue protein sequence, read N- to C-terminus: High mobility group B protein 15 (448 aa).

The 92-residue stretch at 29-120 (VADPRLFMTS…LLNNYEQIYF (92 aa)) folds into the ARID domain. Polar residues predominate over residues 219–236 (PQQSHGVLPNTLNISANP). 3 disordered regions span residues 219–270 (PQQS…RSGY), 333–352 (KKNG…LPEQ), and 366–448 (VEED…AEQN). Residues 244-255 (TKRRRRRKKSEI) show a composition bias toward basic residues. A DNA-binding region (HMG box) is located at residues 263-330 (PKPNRSGYNF…RYRTEMEDYR (68 aa)). A compositionally biased stretch (acidic residues) spans 389-398 (SIETDPELEE). The segment covering 399 to 412 (PSLNPSGPNLNPNP) has biased composition (low complexity).

This sequence belongs to the HMGB family.

It localises to the nucleus. Binds preferentially DNA with A/T-rich content. This Arabidopsis thaliana (Mouse-ear cress) protein is High mobility group B protein 15 (HMGB15).